Reading from the N-terminus, the 439-residue chain is GTPase Der (439 aa).

EngA-type G domains lie at P3 to G167 and I176 to T351. Residues G9–S16, D56–I60, N119–D122, G182–S189, D229–L233, and N294–D297 each bind GTP. The KH-like domain maps to R352–G436.

Belongs to the TRAFAC class TrmE-Era-EngA-EngB-Septin-like GTPase superfamily. EngA (Der) GTPase family. Associates with the 50S ribosomal subunit.

GTPase that plays an essential role in the late steps of ribosome biogenesis. This Caldicellulosiruptor saccharolyticus (strain ATCC 43494 / DSM 8903 / Tp8T 6331) protein is GTPase Der.